The chain runs to 357 residues: Protein RecA (357 aa).

Residue 67–74 (GPESSGKT) participates in ATP binding. The disordered stretch occupies residues 335–357 (LSSSASDDENSEGNVDFETGEVF).

Belongs to the RecA family.

It localises to the cytoplasm. Its function is as follows. Can catalyze the hydrolysis of ATP in the presence of single-stranded DNA, the ATP-dependent uptake of single-stranded DNA by duplex DNA, and the ATP-dependent hybridization of homologous single-stranded DNAs. It interacts with LexA causing its activation and leading to its autocatalytic cleavage. The sequence is that of Protein RecA from Shewanella sp. (strain MR-4).